Consider the following 1108-residue polypeptide: Probable arabinosyltransferase A (1108 aa).

Transmembrane regions (helical) follow at residues 12-34, 204-223, 258-280, 334-356, 368-387, 397-414, 421-443, 463-482, 531-553, 582-604, 616-638, 653-675, and 696-718; these read IPRSVAAVAGIAGLLLCLAVPLL, IVMVLGTLAVLTAIVALAVL, VGLATWIADAAVLATLLLWHVVG, VWMRLPATLAGIGCWLIISHWVL, ANRVAVFTAGAVFVAAWLPF, IALGVLVTWMLVERAIAL, AVAVVVALLTATLAPQGLIAVAA, GLLAPLAVLAAALSLILVVV, FAVLVMLLCLFGMLVILLRRGHV, WAVQFGAFAGLAGALGALTAFAC, TLYVTALLFVLAWATSGINGWFY, IASHPVTSMFLTLSIITGLLAAW, and VLASTPLLVVATIMVVGEVASLT. Residues 804-825 form a disordered region; sequence PGLVNSDASPNKPNVAYSDSAG.

The protein belongs to the emb family.

The protein localises to the cell membrane. In terms of biological role, arabinosyl transferase responsible for the polymerization of arabinose into the arabinan of arabinogalactan. The polypeptide is Probable arabinosyltransferase A (embA) (Mycobacterium avium).